The sequence spans 575 residues: Transport inhibitor response 1-like protein Os04g0395600 (575 aa).

An F-box domain is found at 1-45 (MTYFPEEVVEHIFSFLPAQRDRNTVSLVCKVWYEIERLSRRGVFV). Position 69 (Lys69) interacts with 1D-myo-inositol hexakisphosphate. The interval 76-77 (DF) is interaction with auxin-responsive proteins. Residues 108-109 (KR) and Arg340 each bind 1D-myo-inositol hexakisphosphate. Residues 343-348 (PSDFYV) are interaction with auxin-responsive proteins. Residue 396 to 398 (RFR) participates in 1D-myo-inositol hexakisphosphate binding. Residues 400–404 (CILEP) form an interaction with auxin-responsive proteins region. Arg431 lines the 1D-myo-inositol hexakisphosphate pocket. Positions 459–460 (AF) are interaction with auxin-responsive proteins. 1D-myo-inositol hexakisphosphate-binding positions include 479-480 (RK) and Arg504.

Part of a SCF (SKP1-cullin-F-box) protein ligase complex. May interact with auxin and auxin-responsive proteins.

It is found in the nucleus. It participates in protein modification; protein ubiquitination. This Oryza sativa subsp. japonica (Rice) protein is Transport inhibitor response 1-like protein Os04g0395600.